A 993-amino-acid polypeptide reads, in one-letter code: Desmoglein-3 (993 aa).

A signal peptide spans 1-23 (MTCLFPRALGSLALLMVVLLVQG). Positions 24-49 (ELHVKPGGQHREDGTALQLAKRRYKR) are excised as a propeptide. Cadherin domains are found at residues 50–157 (EWVK…PPIF), 158–267 (SQTI…FPVL), 268–388 (RESQ…PPSK), and 384–495 (RPPS…CPSV). The Extracellular segment spans residues 50-617 (EWVKFAKPCR…YGESSWRLGP (568 aa)). 2 N-linked (GlcNAc...) asparagine glycosylation sites follow: asparagine 110 and asparagine 180. Asparagine 459 and asparagine 546 each carry an N-linked (GlcNAc...) asparagine glycan. The chain crosses the membrane as a helical span at residues 618–638 (AAIGLILLGLLMLLLAPLLLL). Residues 639–993 (TCDCGSGPIG…LYTKETCSHL (355 aa)) lie on the Cytoplasmic side of the membrane. The interval 641-714 (DCGSGPIGGA…NTYAGGTMVE (74 aa)) is required for interaction with CTNND1 and localization at cell-cell junctions. The interval 845–876 (AKQAKPGPKDSGSGADTCARSMEVPQSGSNRY) is disordered. 2 Desmoglein repeat repeats span residues 905–930 (MSTSGSVHPAVAIPDPLQLGNYLLTE) and 931–961 (TYSTSGSFAQPTTVTFDPHVTQNVTVTERVI).

In terms of assembly, homodimer. Part of a complex that contains DSG3, PKP1, YAP1 and YWHAG; the complex is required for localization of DSG3 and YAP1 to the cell membrane in keratinocytes. Interacts with PKP2. Interacts with CTNND1; the interaction facilitates DSG3 localization and retention at cell-cell junctions. Interacts with CDH1; the interaction is required for CDH1 localization to developing adherens junctions. Interacts with RAC1; the interaction is required for DSG3 translocation to cell-cell junctions, organization of cortical F-actin bundles and actin anchoring at cell-cell junctions. Interacts with DSC3; the interaction may limit the interaction of DSC3 with p38MAPK family members and therefore repress p38MAPK signaling activation. In terms of tissue distribution, expressed in the basal layer of the outer root sheath of the telogen hair club, specifically at the cell membrane between the apex of the cells and the surrounding hair club (at protein level). Expression is less abundant between the lateral margins of the outer root sheath basal cells (at protein level). Expressed in epidermis. Expressed in the epithelium of the tongue.

The protein resides in the cell membrane. Its subcellular location is the cell junction. The protein localises to the desmosome. It localises to the cytoplasm. It is found in the tight junction. Its function is as follows. A component of desmosome cell-cell junctions which are required for positive regulation of cellular adhesion. Required for adherens and desmosome junction assembly in response to mechanical force in keratinocytes. Required for desmosome-mediated cell-cell adhesion of cells surrounding the telogen hair club and the basal layer of the outer root sheath epithelium, consequently is essential for the anchoring of telogen hairs in the hair follicle. Required for the maintenance of the epithelial barrier via promoting desmosome-mediated intercellular attachment of suprabasal epithelium to basal cells. May play a role in the protein stability of the desmosome plaque components DSP, JUP, PKP1, PKP2 and PKP3. Required for YAP1 localization at the plasma membrane in keratinocytes in response to mechanical strain, via the formation of an interaction complex composed of DSG3, PKP1 and YWHAG. May also be involved in the positive regulation of YAP1 target gene transcription and as a result cell proliferation. Positively regulates cellular contractility and cell junction formation via organization of cortical F-actin bundles and anchoring of actin to tight junctions, in conjunction with RAC1. The cytoplasmic pool of DSG3 is required for the localization of CDH1 and CTNNB1 at developing adherens junctions, potentially via modulation of SRC activity. Inhibits keratinocyte migration via suppression of p38MAPK signaling, may therefore play a role in moderating wound healing. In Mus musculus (Mouse), this protein is Desmoglein-3 (Dsg3).